A 192-amino-acid polypeptide reads, in one-letter code: PTS-dependent dihydroxyacetone kinase, ADP-binding subunit DhaL (192 aa).

In terms of domain architecture, DhaL spans 5–189 (DTTIEWLGKF…SAYLFETLLE (185 aa)). Mg(2+)-binding residues include Asp29, Asp34, and Asp36. Residues 37-40 (HGAN), 78-79 (AS), Gly115, Met124, Arg161, and 174-176 (DPG) contribute to the ADP site.

Homodimer. The dihydroxyacetone kinase complex is composed of a homodimer of DhaM, a homodimer of DhaK and the subunit DhaL. It depends on Mg(2+) as a cofactor.

It is found in the cytoplasm. The catalysed reaction is dihydroxyacetone + phosphoenolpyruvate = dihydroxyacetone phosphate + pyruvate. It participates in polyol metabolism; glycerol degradation. In terms of biological role, ADP-binding subunit of the dihydroxyacetone kinase, which is responsible for the phosphoenolpyruvate (PEP)-dependent phosphorylation of dihydroxyacetone. DhaL-ADP is converted to DhaL-ATP via a phosphoryl group transfer from DhaM and transmits it to dihydroxyacetone binds to DhaK. In Lactococcus lactis subsp. lactis (strain IL1403) (Streptococcus lactis), this protein is PTS-dependent dihydroxyacetone kinase, ADP-binding subunit DhaL.